We begin with the raw amino-acid sequence, 404 residues long: Glucose-1-phosphate adenylyltransferase (404 aa).

Residues Tyr-99, Gly-164, 179–180, and Ser-197 contribute to the alpha-D-glucose 1-phosphate site; that span reads EK.

The protein belongs to the bacterial/plant glucose-1-phosphate adenylyltransferase family.

The catalysed reaction is alpha-D-glucose 1-phosphate + ATP + H(+) = ADP-alpha-D-glucose + diphosphate. It participates in capsule biogenesis; capsule polysaccharide biosynthesis. The protein operates within glycan biosynthesis; glycogen biosynthesis. Functionally, involved in the biosynthesis of ADP-glucose, a building block, required in the biosynthesis of maltose-1-phosphate (M1P) and in the elongation reactions to produce linear alpha-1,4-glucans. Catalyzes the reaction between ATP and alpha-D-glucose 1-phosphate (G1P) to produce pyrophosphate and ADP-Glc. The protein is Glucose-1-phosphate adenylyltransferase of Mycobacterium ulcerans (strain Agy99).